A 152-amino-acid polypeptide reads, in one-letter code: Deoxyuridine 5'-triphosphate nucleotidohydrolase (152 aa).

Substrate contacts are provided by residues 71 to 73 (RSG), asparagine 84, 88 to 90 (LID), and methionine 98.

The protein belongs to the dUTPase family. It depends on Mg(2+) as a cofactor.

It catalyses the reaction dUTP + H2O = dUMP + diphosphate + H(+). It functions in the pathway pyrimidine metabolism; dUMP biosynthesis; dUMP from dCTP (dUTP route): step 2/2. Functionally, this enzyme is involved in nucleotide metabolism: it produces dUMP, the immediate precursor of thymidine nucleotides and it decreases the intracellular concentration of dUTP so that uracil cannot be incorporated into DNA. The protein is Deoxyuridine 5'-triphosphate nucleotidohydrolase of Shewanella baltica (strain OS185).